The following is a 336-amino-acid chain: Glyceraldehyde-3-phosphate dehydrogenase (336 aa).

NAD(+)-binding positions include Arg-12–Ile-13, Asp-34, Arg-78, and Thr-121. D-glyceraldehyde 3-phosphate-binding positions include Ser-151–Thr-153, Thr-182, Arg-199, Thr-212–Gly-213, and Arg-235. Cys-152 serves as the catalytic Nucleophile. Asn-316 is a binding site for NAD(+).

Belongs to the glyceraldehyde-3-phosphate dehydrogenase family. As to quaternary structure, homotetramer.

It is found in the cytoplasm. The enzyme catalyses D-glyceraldehyde 3-phosphate + phosphate + NAD(+) = (2R)-3-phospho-glyceroyl phosphate + NADH + H(+). Its pathway is carbohydrate degradation; glycolysis; pyruvate from D-glyceraldehyde 3-phosphate: step 1/5. Functionally, also binds human plasminogen. Its function is as follows. Catalyzes the oxidative phosphorylation of glyceraldehyde 3-phosphate (G3P) to 1,3-bisphosphoglycerate (BPG) using the cofactor NAD. The first reaction step involves the formation of a hemiacetal intermediate between G3P and a cysteine residue, and this hemiacetal intermediate is then oxidized to a thioester, with concomitant reduction of NAD to NADH. The reduced NADH is then exchanged with the second NAD, and the thioester is attacked by a nucleophilic inorganic phosphate to produce BPG. This Streptococcus pyogenes protein is Glyceraldehyde-3-phosphate dehydrogenase (gap).